The primary structure comprises 36 residues: Photosystem II reaction center protein M (36 aa).

Residues 5 to 25 (ILAFIATALFILVPTAFLLII) traverse the membrane as a helical segment.

Belongs to the PsbM family. PSII is composed of 1 copy each of membrane proteins PsbA, PsbB, PsbC, PsbD, PsbE, PsbF, PsbH, PsbI, PsbJ, PsbK, PsbL, PsbM, PsbT, PsbX, PsbY, PsbZ, Psb30/Ycf12, at least 3 peripheral proteins of the oxygen-evolving complex and a large number of cofactors. It forms dimeric complexes.

The protein resides in the plastid. It is found in the chloroplast thylakoid membrane. One of the components of the core complex of photosystem II (PSII). PSII is a light-driven water:plastoquinone oxidoreductase that uses light energy to abstract electrons from H(2)O, generating O(2) and a proton gradient subsequently used for ATP formation. It consists of a core antenna complex that captures photons, and an electron transfer chain that converts photonic excitation into a charge separation. This subunit is found at the monomer-monomer interface. The protein is Photosystem II reaction center protein M of Panax ginseng (Korean ginseng).